Consider the following 417-residue polypeptide: NADH-quinone oxidoreductase subunit D (417 aa).

It belongs to the complex I 49 kDa subunit family. In terms of assembly, NDH-1 is composed of 14 different subunits. Subunits NuoB, C, D, E, F, and G constitute the peripheral sector of the complex.

The protein resides in the cell inner membrane. The catalysed reaction is a quinone + NADH + 5 H(+)(in) = a quinol + NAD(+) + 4 H(+)(out). Its function is as follows. NDH-1 shuttles electrons from NADH, via FMN and iron-sulfur (Fe-S) centers, to quinones in the respiratory chain. The immediate electron acceptor for the enzyme in this species is believed to be ubiquinone. Couples the redox reaction to proton translocation (for every two electrons transferred, four hydrogen ions are translocated across the cytoplasmic membrane), and thus conserves the redox energy in a proton gradient. This is NADH-quinone oxidoreductase subunit D from Ralstonia pickettii (strain 12J).